Here is a 464-residue protein sequence, read N- to C-terminus: UDP-N-acetylmuramate--L-alanine ligase (464 aa).

115-121 provides a ligand contact to ATP; that stretch reads GSHGKTT.

Belongs to the MurCDEF family.

The protein resides in the cytoplasm. The catalysed reaction is UDP-N-acetyl-alpha-D-muramate + L-alanine + ATP = UDP-N-acetyl-alpha-D-muramoyl-L-alanine + ADP + phosphate + H(+). It participates in cell wall biogenesis; peptidoglycan biosynthesis. Functionally, cell wall formation. The protein is UDP-N-acetylmuramate--L-alanine ligase of Pelagibacter ubique (strain HTCC1062).